Reading from the N-terminus, the 250-residue chain is 1-(5-phosphoribosyl)-5-[(5-phosphoribosylamino)methylideneamino] imidazole-4-carboxamide isomerase (250 aa).

Asp-8 serves as the catalytic Proton acceptor. The active-site Proton donor is Asp-131.

This sequence belongs to the HisA/HisF family.

It is found in the cytoplasm. It catalyses the reaction 1-(5-phospho-beta-D-ribosyl)-5-[(5-phospho-beta-D-ribosylamino)methylideneamino]imidazole-4-carboxamide = 5-[(5-phospho-1-deoxy-D-ribulos-1-ylimino)methylamino]-1-(5-phospho-beta-D-ribosyl)imidazole-4-carboxamide. The protein operates within amino-acid biosynthesis; L-histidine biosynthesis; L-histidine from 5-phospho-alpha-D-ribose 1-diphosphate: step 4/9. This Paraburkholderia xenovorans (strain LB400) protein is 1-(5-phosphoribosyl)-5-[(5-phosphoribosylamino)methylideneamino] imidazole-4-carboxamide isomerase.